The chain runs to 584 residues: ATP-dependent lipid A-core flippase (584 aa).

Helical transmembrane passes span 15–35 (LLGY…SMAV), 63–83 (IMWV…AGFI), 153–173 (LGML…CLVV), 251–271 (TGVT…FAGL), and 277–297 (GLTA…FAPV). The region spanning 27 to 309 (LLSMLSMAVA…ISSVSQAMQR (283 aa)) is the ABC transmembrane type-1 domain. In terms of domain architecture, ABC transporter spans 341–576 (LSFDAVSFAY…GGLYARLHSL (236 aa)). 375-382 (GSSGSGKT) contacts ATP.

The protein belongs to the ABC transporter superfamily. Lipid exporter (TC 3.A.1.106) family. In terms of assembly, homodimer.

The protein localises to the cell inner membrane. The enzyme catalyses ATP + H2O + lipid A-core oligosaccharideSide 1 = ADP + phosphate + lipid A-core oligosaccharideSide 2.. Its function is as follows. Involved in lipopolysaccharide (LPS) biosynthesis. Translocates lipid A-core from the inner to the outer leaflet of the inner membrane. Transmembrane domains (TMD) form a pore in the inner membrane and the ATP-binding domain (NBD) is responsible for energy generation. The polypeptide is ATP-dependent lipid A-core flippase (Chromobacterium violaceum (strain ATCC 12472 / DSM 30191 / JCM 1249 / CCUG 213 / NBRC 12614 / NCIMB 9131 / NCTC 9757 / MK)).